We begin with the raw amino-acid sequence, 773 residues long: MALFLLTCLLAVFSAATAQSSLLGPSSIFGPGEVNVLEGDSVSITCYYPTTSVTRHSRKFWCREEESGRCVTLASTGYTSQEYSGRGKLTDFPDKGEFVVTVDQLTQNDSGSYKCGVGVNGRGLDFGVNVLVSQKPEPDDVVYKQYESYTVTITCPFTYATRQLKKSFYKVEDGELVLIIDSSSKEAKDPRYKGRITLQIQSTTAKEFTVTIKHLQLNDAGQYVCQSGSDPTAEEQNVDLRLLTPGLLYGNLGGSVTFECALDSEDANAVASLRQVRGGNVVIDSQGTIDPAFEGRILFTKAENGHFSVVIAGLRKEDTGNYLCGVQSNGQSGDGPTQLRQLFVNEEIDVSRSPPVLKGFPGGSVTIRCPYNPKRSDSHLQLYLWEGSQTRHLLVDSGEGLVQKDYTGRLALFEEPGNGTFSVVLNQLTAEDEGFYWCVSDDDESLTTSVKLQIVDGEPSPTIDKFTAVQGEPVEITCHFPCKYFSSEKYWCKWNDHGCEDLPTKLSSSGDLVKCNNNLVLTLTLDSVSEDDEGWYWCGAKDGHEFEEVAAVRVELTEPAKVAVEPAKVPVDPAKAAPAPAEEKAKARCPVPRRRQWYPLSRKLRTSCPEPRLLAEEVAVQSAEDPASGSRASVDASSASGQSGSAKVLISTLVPLGLVLAAGAMAVAIARARHRRNVDRVSIGSYRTDISMSDLENSREFGAIDNPSACPDARETALGGKDELATATESTVEIEEPKKAKRSSKEEADLAYSAFLLQSNTIAAEHQDGPKEA.

An N-terminal signal peptide occupies residues 1–18; it reads MALFLLTCLLAVFSAATA. At 19–647 the chain is on the extracellular side; sequence QSSLLGPSSI…SASGQSGSAK (629 aa). One can recognise an Ig-like V-type 1; required for binding to polymeric IgA and IgM domain in the interval 25–131; it reads PSSIFGPGEV…RGLDFGVNVL (107 aa). 5 disulfides stabilise this stretch: cysteine 46–cysteine 115, cysteine 155–cysteine 225, cysteine 260–cysteine 324, cysteine 369–cysteine 438, and cysteine 478–cysteine 538. A glycan (N-linked (GlcNAc...) asparagine; in variant N-88) is linked at lysine 88. Asparagine 108 carries N-linked (GlcNAc...) asparagine glycosylation. Ig-like V-type domains lie at 138–232, 233–340, 352–455, and 461–557; these read PDDV…SDPT, AEEQ…TQLR, RSPP…LQIV, and PTID…VELT. An N-linked (GlcNAc...) asparagine glycan is attached at asparagine 418. The segment at 619–641 is disordered; the sequence is AVQSAEDPASGSRASVDASSASG. Residues 632-641 show a composition bias toward low complexity; the sequence is ASVDASSASG. Residues 648-670 form a helical membrane-spanning segment; sequence VLISTLVPLGLVLAAGAMAVAIA. The Cytoplasmic portion of the chain corresponds to 671–773; sequence RARHRRNVDR…AEHQDGPKEA (103 aa). 4 positions are modified to phosphoserine: serine 682, serine 691, serine 698, and serine 744. The tract at residues 725-746 is disordered; sequence ATATESTVEIEEPKKAKRSSKE. Positions 735–746 are enriched in basic and acidic residues; sequence EEPKKAKRSSKE.

Interacts (mainly via CDR1-like domain) with dimeric IgA. Interacts (mainly via CDR2-like domain) with pentameric IgM. In terms of assembly, either free or part of the secretory IgA (sIgA) complex that consists of two, four or five IgA monomers, and two additional non-Ig polypeptides, namely the JCHAIN and the secretory component (the proteolytic product of PIGR). Free secretory component interacts with bacterial antigens toxA of C.difficile and eae of E.coli. N-glycosylated. N-glycosylation is required for anchoring IgA molecules to mucus, but is not necessary for Ig binding.

It localises to the cell membrane. Its subcellular location is the secreted. Mediates selective transcytosis of polymeric IgA and IgM across mucosal epithelial cells. Binds polymeric IgA and IgM at the basolateral surface of epithelial cells. The complex is then transported across the cell to be secreted at the apical surface. During this process, a cleavage occurs that separates the extracellular (known as the secretory component) from the transmembrane segment. In terms of biological role, through its N-linked glycans ensures anchoring of secretory IgA (sIgA) molecules to mucus lining the epithelial surface to neutralize extracellular pathogens. On its own (free form) may act as a non-specific microbial scavenger to prevent pathogen interaction with epithelial cells. This is Polymeric immunoglobulin receptor (PIGR) from Oryctolagus cuniculus (Rabbit).